The primary structure comprises 174 residues: Caltractin ICL1e (174 aa).

Residues 1–33 (MSKKQQAPVAQKPVGKQQQVNRKPQDRPGLTED) form a disordered region. EF-hand domains lie at 33 to 68 (DEIE…LGFD), 88 to 103 (IDFD…KLGN), 105 to 140 (ESRD…LGET), and 141 to 174 (MTAE…KRTF).

Belongs to the centrin family. Monomer.

The protein resides in the cytoplasm. It localises to the cytoskeleton. In terms of biological role, plays a fundamental role in microtubule organizing center structure and function. Component of the infraciliary lattice (ICL) and the ciliary basal bodies. This Paramecium tetraurelia protein is Caltractin ICL1e (Icl1e).